We begin with the raw amino-acid sequence, 294 residues long: Cytidine deaminase (294 aa).

CMP/dCMP-type deaminase domains are found at residues 48–168 (DEDA…FGPK) and 186–294 (VSGD…VLLG). 89–91 (NME) contacts substrate. Position 102 (H102) interacts with Zn(2+). E104 serves as the catalytic Proton donor. Residues C129 and C132 each coordinate Zn(2+).

The protein belongs to the cytidine and deoxycytidylate deaminase family. In terms of assembly, homodimer. Requires Zn(2+) as cofactor.

It carries out the reaction cytidine + H2O + H(+) = uridine + NH4(+). The catalysed reaction is 2'-deoxycytidine + H2O + H(+) = 2'-deoxyuridine + NH4(+). In terms of biological role, this enzyme scavenges exogenous and endogenous cytidine and 2'-deoxycytidine for UMP synthesis. The sequence is that of Cytidine deaminase from Klebsiella pneumoniae subsp. pneumoniae (strain ATCC 700721 / MGH 78578).